Reading from the N-terminus, the 152-residue chain is Large ribosomal subunit protein uL13 (152 aa).

This sequence belongs to the universal ribosomal protein uL13 family. As to quaternary structure, part of the 50S ribosomal subunit.

Its function is as follows. This protein is one of the early assembly proteins of the 50S ribosomal subunit, although it is not seen to bind rRNA by itself. It is important during the early stages of 50S assembly. The sequence is that of Large ribosomal subunit protein uL13 from Wolbachia sp. subsp. Drosophila simulans (strain wRi).